We begin with the raw amino-acid sequence, 220 residues long: Superoxide dismutase [Fe] (220 aa).

Fe cation is bound by residues His-26, His-73, Asp-164, and His-168.

The protein belongs to the iron/manganese superoxide dismutase family. Homodimer. Fe cation serves as cofactor.

The catalysed reaction is 2 superoxide + 2 H(+) = H2O2 + O2. In terms of biological role, destroys superoxide anion radicals which are normally produced within the cells and which are toxic to biological systems. This chain is Superoxide dismutase [Fe] (sodB), found in Campylobacter jejuni subsp. jejuni serotype O:2 (strain ATCC 700819 / NCTC 11168).